A 358-amino-acid polypeptide reads, in one-letter code: Phospho-N-acetylmuramoyl-pentapeptide-transferase (358 aa).

The next 10 helical transmembrane spans lie at 24–44, 73–93, 95–115, 134–154, 169–189, 197–217, 233–253, 261–281, 286–306, and 335–355; these read FRSI…GPWV, TMGG…WADL, NVFI…GFVD, MFWQ…LPGF, ELGI…SNAV, GLAI…CYIA, GAGE…GFLW, VFMG…LAVL, ILLV…IFQV, and KIIV…ISTL.

Belongs to the glycosyltransferase 4 family. MraY subfamily. Mg(2+) serves as cofactor.

It is found in the cell inner membrane. The enzyme catalyses UDP-N-acetyl-alpha-D-muramoyl-L-alanyl-gamma-D-glutamyl-meso-2,6-diaminopimeloyl-D-alanyl-D-alanine + di-trans,octa-cis-undecaprenyl phosphate = di-trans,octa-cis-undecaprenyl diphospho-N-acetyl-alpha-D-muramoyl-L-alanyl-D-glutamyl-meso-2,6-diaminopimeloyl-D-alanyl-D-alanine + UMP. It participates in cell wall biogenesis; peptidoglycan biosynthesis. Catalyzes the initial step of the lipid cycle reactions in the biosynthesis of the cell wall peptidoglycan: transfers peptidoglycan precursor phospho-MurNAc-pentapeptide from UDP-MurNAc-pentapeptide onto the lipid carrier undecaprenyl phosphate, yielding undecaprenyl-pyrophosphoryl-MurNAc-pentapeptide, known as lipid I. The sequence is that of Phospho-N-acetylmuramoyl-pentapeptide-transferase from Citrifermentans bemidjiense (strain ATCC BAA-1014 / DSM 16622 / JCM 12645 / Bem) (Geobacter bemidjiensis).